The chain runs to 80 residues: Small ribosomal subunit protein bS18 (80 aa).

This sequence belongs to the bacterial ribosomal protein bS18 family. In terms of assembly, part of the 30S ribosomal subunit. Forms a tight heterodimer with protein bS6.

Functionally, binds as a heterodimer with protein bS6 to the central domain of the 16S rRNA, where it helps stabilize the platform of the 30S subunit. The protein is Small ribosomal subunit protein bS18 of Staphylococcus carnosus (strain TM300).